Reading from the N-terminus, the 504-residue chain is Putative glycerol-3-phosphate transporter 2 (504 aa).

12 helical membrane-spanning segments follow: residues 31 to 51 (LSFK…YIAF), 84 to 104 (ALLG…MFVA), 116 to 136 (FLTI…VAFW), 145 to 165 (FLAV…CIVA), 178 to 198 (MIMG…SLIA), 210 to 230 (FLGP…FLPV), 280 to 302 (IPGV…TFLY), 324 to 344 (GNLS…AGYI), 352 to 372 (AITA…YRVF), 378 to 398 (TINV…FALI), 424 to 444 (AIID…TGYI), and 452 to 472 (VFYM…KLII).

Belongs to the major facilitator superfamily. Organophosphate:Pi antiporter (OPA) (TC 2.A.1.4) family. Expressed in the root-hair differentiation zone.

It is found in the membrane. The sequence is that of Putative glycerol-3-phosphate transporter 2 from Arabidopsis thaliana (Mouse-ear cress).